A 398-amino-acid chain; its full sequence is Phosphoglycerate kinase (398 aa).

Residues 20 to 22 (DFN), arginine 35, 58 to 61 (HLGK), arginine 118, and arginine 155 contribute to the substrate site. ATP-binding positions include lysine 208, glycine 296, glutamate 327, and 354–357 (GGDS).

The protein belongs to the phosphoglycerate kinase family. In terms of assembly, monomer.

It localises to the cytoplasm. The enzyme catalyses (2R)-3-phosphoglycerate + ATP = (2R)-3-phospho-glyceroyl phosphate + ADP. It functions in the pathway carbohydrate degradation; glycolysis; pyruvate from D-glyceraldehyde 3-phosphate: step 2/5. The chain is Phosphoglycerate kinase from Fusobacterium nucleatum subsp. nucleatum (strain ATCC 25586 / DSM 15643 / BCRC 10681 / CIP 101130 / JCM 8532 / KCTC 2640 / LMG 13131 / VPI 4355).